We begin with the raw amino-acid sequence, 236 residues long: Chloride intracellular channel protein 3 (236 aa).

Residues 1–88 (MAETKLQLFV…EDFLEETLGP (88 aa)) are required for insertion into the membrane. The 79-residue stretch at 12–90 (ASEDGESVGH…FLEETLGPPD (79 aa)) folds into the GST N-terminal domain. The G-site motif lies at 22-25 (CPSC). A disulfide bridge links C22 with C25. Residues 24 to 44 (SCQRLFMVLLLKGVPFTLTTV) traverse the membrane as a helical segment. A phosphoserine mark is found at S49 and S159. The GST C-terminal domain maps to 68–235 (DSDAKTDTLQ…LAAYRPAVHP (168 aa)).

The protein belongs to the chloride channel CLIC family. As to quaternary structure, associated with the C-terminal of MAPK15. As to expression, detected in placenta (at protein level). Widely expressed. High expression is found in placenta followed by lung and heart. Low expression in skeletal muscle, kidney and pancreas.

The protein resides in the nucleus. The protein localises to the membrane. It is found in the cell membrane. It localises to the cytoplasm. Its subcellular location is the secreted. The protein resides in the extracellular space. The protein localises to the extracellular matrix. The catalysed reaction is chloride(in) = chloride(out). With respect to regulation, inhibited by rapamycin, amphotericin B and IAA-94. In terms of biological role, in the soluble state, catalyzes glutaredoxin-like thiol disulfide exchange reactions with reduced glutathione as electron donor. Reduced in a glutathione-dependent way and secreted into the extracellular matrix where it activates TGM2 and promotes blood vessel growth during tissue remodeling as occurs in tumorigenesis. Can reduce specific cysteines in TGM2 and regulate cofactor binding. Can insert into membranes and form outwardly rectifying chloride ion channels. May participate in cellular growth control. The chain is Chloride intracellular channel protein 3 from Homo sapiens (Human).